A 660-amino-acid polypeptide reads, in one-letter code: DNA ligase (660 aa).

Residues 32 to 36 (DEVYD), 81 to 82 (SM), and Glu112 each bind NAD(+). The active-site N6-AMP-lysine intermediate is Lys114. Residues Arg135, Glu169, Lys284, and Lys308 each contribute to the NAD(+) site. Positions 402, 405, 418, and 423 each coordinate Zn(2+). Residues 578-660 (VENSPLAHKT…ELLKEAGIEA (83 aa)) enclose the BRCT domain.

This sequence belongs to the NAD-dependent DNA ligase family. LigA subfamily. Requires Mg(2+) as cofactor. It depends on Mn(2+) as a cofactor.

The catalysed reaction is NAD(+) + (deoxyribonucleotide)n-3'-hydroxyl + 5'-phospho-(deoxyribonucleotide)m = (deoxyribonucleotide)n+m + AMP + beta-nicotinamide D-nucleotide.. DNA ligase that catalyzes the formation of phosphodiester linkages between 5'-phosphoryl and 3'-hydroxyl groups in double-stranded DNA using NAD as a coenzyme and as the energy source for the reaction. It is essential for DNA replication and repair of damaged DNA. This Nitratiruptor sp. (strain SB155-2) protein is DNA ligase.